The chain runs to 246 residues: Orotidine 5'-phosphate decarboxylase (246 aa).

Residues Asp-22, Lys-44, 71-80, Thr-130, Arg-191, Gln-201, Gly-221, and Arg-222 each bind substrate; that span reads DLKYHDIPHT. Lys-73 serves as the catalytic Proton donor.

It belongs to the OMP decarboxylase family. Type 1 subfamily. In terms of assembly, homodimer.

It carries out the reaction orotidine 5'-phosphate + H(+) = UMP + CO2. It participates in pyrimidine metabolism; UMP biosynthesis via de novo pathway; UMP from orotate: step 2/2. Functionally, catalyzes the decarboxylation of orotidine 5'-monophosphate (OMP) to uridine 5'-monophosphate (UMP). This chain is Orotidine 5'-phosphate decarboxylase, found in Neisseria meningitidis serogroup B (strain ATCC BAA-335 / MC58).